The chain runs to 231 residues: MSVTLALPSKGRLKEKTLAVLEKAGYKVVLPDDDRNYRARVEGEDDLDILFLSASEIARELGYGSVDLGVTGEDLARETLAHADERVAIEAQLGFGHADVVVAVPEVWRDVTTMADLDDVAADFRQRHGRRLRIATKYWRLTQQFFSQKHGIQVYRIVESLGATEGAPAAGSADMIVDITSTGSTLRANRLKVLEDGIILRSQACLVSARRSHTSRRVEEIAARIRAGLEI.

Belongs to the ATP phosphoribosyltransferase family. Short subfamily. As to quaternary structure, heteromultimer composed of HisG and HisZ subunits.

The protein localises to the cytoplasm. The catalysed reaction is 1-(5-phospho-beta-D-ribosyl)-ATP + diphosphate = 5-phospho-alpha-D-ribose 1-diphosphate + ATP. It participates in amino-acid biosynthesis; L-histidine biosynthesis; L-histidine from 5-phospho-alpha-D-ribose 1-diphosphate: step 1/9. Its function is as follows. Catalyzes the condensation of ATP and 5-phosphoribose 1-diphosphate to form N'-(5'-phosphoribosyl)-ATP (PR-ATP). Has a crucial role in the pathway because the rate of histidine biosynthesis seems to be controlled primarily by regulation of HisG enzymatic activity. The polypeptide is ATP phosphoribosyltransferase (Brucella suis biovar 1 (strain 1330)).